The chain runs to 148 residues: Urease accessory protein UreE (148 aa).

The protein belongs to the UreE family.

The protein resides in the cytoplasm. Involved in urease metallocenter assembly. Binds nickel. Probably functions as a nickel donor during metallocenter assembly. The chain is Urease accessory protein UreE from Geobacillus kaustophilus (strain HTA426).